Consider the following 101-residue polypeptide: MQLRYFLLLAAALFCIGIYGLITSRNAVRVLMSIELLLNAVNLNLMAFSNYLDSTLIKGQVFTVFVITVAAAEAAVGLAIVLAIYRNRDTVDMEQFNLLKW.

The next 3 helical transmembrane spans lie at 3–23 (LRYF…GLIT), 30–50 (VLMS…AFSN), and 64–84 (VFVI…VLAI).

This sequence belongs to the complex I subunit 4L family. As to quaternary structure, NDH-1 can be composed of about 15 different subunits; different subcomplexes with different compositions have been identified which probably have different functions.

It localises to the cellular thylakoid membrane. The catalysed reaction is a plastoquinone + NADH + (n+1) H(+)(in) = a plastoquinol + NAD(+) + n H(+)(out). It carries out the reaction a plastoquinone + NADPH + (n+1) H(+)(in) = a plastoquinol + NADP(+) + n H(+)(out). NDH-1 shuttles electrons from an unknown electron donor, via FMN and iron-sulfur (Fe-S) centers, to quinones in the respiratory and/or the photosynthetic chain. The immediate electron acceptor for the enzyme in this species is believed to be plastoquinone. Couples the redox reaction to proton translocation, and thus conserves the redox energy in a proton gradient. Cyanobacterial NDH-1 also plays a role in inorganic carbon-concentration. This chain is NAD(P)H-quinone oxidoreductase subunit 4L, found in Nostoc sp. (strain PCC 7120 / SAG 25.82 / UTEX 2576).